A 631-amino-acid chain; its full sequence is 1-deoxy-D-xylulose-5-phosphate synthase (631 aa).

Residues His-87 and Gly-128 to Ser-130 each bind thiamine diphosphate. Residue Asp-159 participates in Mg(2+) binding. Thiamine diphosphate-binding positions include Gly-160–Ala-161, Asn-188, Phe-295, and Glu-378. Asn-188 is a binding site for Mg(2+).

Belongs to the transketolase family. DXPS subfamily. Homodimer. Requires Mg(2+) as cofactor. Thiamine diphosphate is required as a cofactor.

The enzyme catalyses D-glyceraldehyde 3-phosphate + pyruvate + H(+) = 1-deoxy-D-xylulose 5-phosphate + CO2. The protein operates within metabolic intermediate biosynthesis; 1-deoxy-D-xylulose 5-phosphate biosynthesis; 1-deoxy-D-xylulose 5-phosphate from D-glyceraldehyde 3-phosphate and pyruvate: step 1/1. Functionally, catalyzes the acyloin condensation reaction between C atoms 2 and 3 of pyruvate and glyceraldehyde 3-phosphate to yield 1-deoxy-D-xylulose-5-phosphate (DXP). The sequence is that of 1-deoxy-D-xylulose-5-phosphate synthase from Pseudomonas syringae pv. tomato (strain ATCC BAA-871 / DC3000).